A 212-amino-acid chain; its full sequence is Peptide methionine sulfoxide reductase MsrA (212 aa).

C52 is an active-site residue.

It belongs to the MsrA Met sulfoxide reductase family.

The catalysed reaction is L-methionyl-[protein] + [thioredoxin]-disulfide + H2O = L-methionyl-(S)-S-oxide-[protein] + [thioredoxin]-dithiol. The enzyme catalyses [thioredoxin]-disulfide + L-methionine + H2O = L-methionine (S)-S-oxide + [thioredoxin]-dithiol. Has an important function as a repair enzyme for proteins that have been inactivated by oxidation. Catalyzes the reversible oxidation-reduction of methionine sulfoxide in proteins to methionine. In Salmonella choleraesuis (strain SC-B67), this protein is Peptide methionine sulfoxide reductase MsrA.